The sequence spans 589 residues: Monocopper oxidase-like protein SKS1 (589 aa).

Positions 1 to 24 (MAATCSLLASFLLCFALLSAVSFA) are cleaved as a signal peptide. Residues N62, N111, N204, N243, N260, N296, N345, N365, N433, and N447 are each glycosylated (N-linked (GlcNAc...) asparagine). The interval 322 to 356 (LPVPKTDVSSPWSAMSQPKTIRQNTSASGARPNPQ) is disordered. Over residues 328 to 349 (DVSSPWSAMSQPKTIRQNTSAS) the composition is skewed to polar residues. H455 serves as a coordination point for Cu cation. Residue S563 is the site of GPI-anchor amidated serine attachment. Residues 564–589 (AATSILNGHLKLMLLMVLLASVFRFC) constitute a propeptide, removed in mature form.

It belongs to the multicopper oxidase family. Cu cation serves as cofactor.

The protein resides in the cell membrane. The protein is Monocopper oxidase-like protein SKS1 (SKS1) of Arabidopsis thaliana (Mouse-ear cress).